Reading from the N-terminus, the 235-residue chain is Lipoprotein-releasing system ATP-binding protein LolD (235 aa).

An ABC transporter domain is found at 7–234 (LQCTNLSKRY…QQELTLMGAR (228 aa)). An ATP-binding site is contributed by 43–50 (GSSGSGKS).

It belongs to the ABC transporter superfamily. Lipoprotein translocase (TC 3.A.1.125) family. As to quaternary structure, the complex is composed of two ATP-binding proteins (LolD) and two transmembrane proteins (LolC and LolE).

Its subcellular location is the cell inner membrane. Part of the ABC transporter complex LolCDE involved in the translocation of mature outer membrane-directed lipoproteins, from the inner membrane to the periplasmic chaperone, LolA. Responsible for the formation of the LolA-lipoprotein complex in an ATP-dependent manner. This chain is Lipoprotein-releasing system ATP-binding protein LolD, found in Pectobacterium atrosepticum (strain SCRI 1043 / ATCC BAA-672) (Erwinia carotovora subsp. atroseptica).